Reading from the N-terminus, the 532-residue chain is 2,3-bisphosphoglycerate-independent phosphoglycerate mutase (532 aa).

Asp-15 and Ser-65 together coordinate Mn(2+). Ser-65 (phosphoserine intermediate) is an active-site residue. Residues His-126, 156–157 (RD), Arg-188, Arg-194, 258–261 (RPDR), and Lys-331 contribute to the substrate site. Positions 398, 402, 439, 440, and 457 each coordinate Mn(2+).

This sequence belongs to the BPG-independent phosphoglycerate mutase family. Monomer. Requires Mn(2+) as cofactor.

The catalysed reaction is (2R)-2-phosphoglycerate = (2R)-3-phosphoglycerate. Its pathway is carbohydrate degradation; glycolysis; pyruvate from D-glyceraldehyde 3-phosphate: step 3/5. Functionally, catalyzes the interconversion of 2-phosphoglycerate and 3-phosphoglycerate. This is 2,3-bisphosphoglycerate-independent phosphoglycerate mutase from Nostoc punctiforme (strain ATCC 29133 / PCC 73102).